A 236-amino-acid polypeptide reads, in one-letter code: Eukaryotic translation initiation factor 3 subunit J (236 aa).

Residues 1–65 form a disordered region; the sequence is MADDWESAAD…APAKPKPNKA (65 aa). A compositionally biased stretch (acidic residues) spans 28–46; that stretch reads GEDEDEDIKDSWEDEEEKK. Positions 47 to 58 are enriched in basic and acidic residues; that stretch reads DEEKPTKTEAPA.

This sequence belongs to the eIF-3 subunit J family. Component of the eukaryotic translation initiation factor 3 (eIF-3) complex. The eIF-3 complex interacts with pix.

Its subcellular location is the cytoplasm. Its function is as follows. Component of the eukaryotic translation initiation factor 3 (eIF-3) complex, which is involved in protein synthesis of a specialized repertoire of mRNAs and, together with other initiation factors, stimulates binding of mRNA and methionyl-tRNAi to the 40S ribosome. The eIF-3 complex specifically targets and initiates translation of a subset of mRNAs involved in cell proliferation. The chain is Eukaryotic translation initiation factor 3 subunit J from Drosophila melanogaster (Fruit fly).